The primary structure comprises 148 residues: Cytochrome c-type biogenesis protein CcmE (148 aa).

Topologically, residues 1–7 (MKARNKR) are cytoplasmic. A helical; Signal-anchor for type II membrane protein transmembrane segment spans residues 8 to 28 (LMLVGGGIALLVAAAALVLSA). At 29 to 148 (FQQNLVFFHT…AHKTATTVQQ (120 aa)) the chain is on the periplasmic side. 2 residues coordinate heme: H123 and Y127.

This sequence belongs to the CcmE/CycJ family.

The protein resides in the cell inner membrane. In terms of biological role, heme chaperone required for the biogenesis of c-type cytochromes. Transiently binds heme delivered by CcmC and transfers the heme to apo-cytochromes in a process facilitated by CcmF and CcmH. This Azoarcus sp. (strain BH72) protein is Cytochrome c-type biogenesis protein CcmE.